The primary structure comprises 648 residues: A-type voltage-gated potassium channel KCND1 (648 aa).

At 1 to 183 (MAAGVATWLP…RAFENPHTST (183 aa)) the chain is on the cytoplasmic side. The interaction with KCNIP1, KCNIP2, and other family members stretch occupies residues 2 to 20 (AAGVATWLPFARAAAVGWL). Residues 2 to 20 (AAGVATWLPFARAAAVGWL) form an interaction with KCNIP2 region. 3 residues coordinate Zn(2+): H104, C131, and C132. Residues 144–164 (AERLAEDEEAEQAGDGPTLPA) form a disordered region. Residues 184-205 (AALVFYYVTGFFIAVSVIANVV) form a helical membrane-spanning segment. Residues 206 to 230 (ETIPCRSPTRRPPREQPCGDRFPLA) lie on the Extracellular side of the membrane. Residues 231–252 (FFCMDTACVLIFTGEYLLRLFA) form a helical membrane-spanning segment. At 253–263 (APSRCRFLRSV) the chain is on the cytoplasmic side. A helical membrane pass occupies residues 264–284 (MSLIDVVAILPYYIGLFMPKN). The Extracellular segment spans residues 285 to 287 (EDV). Residues 288–308 (SGAFVTLRVFRVFRIFKFSRH) traverse the membrane as a helical; Voltage-sensor segment. The Cytoplasmic portion of the chain corresponds to 309-323 (SQGLRILGYTLKSCA). The interval 310 to 323 (QGLRILGYTLKSCA) is S4-S5 linker. A helical transmembrane segment spans residues 324–345 (SELGFLLFSLTMAIIIFATVMF). Topologically, residues 346–359 (YAEKGTNKTNFTSI) are extracellular. N-linked (GlcNAc...) asparagine glycans are attached at residues N352 and N355. Positions 360–371 (PAAFWYTIVTMT) form an intramembrane region, helical. The short motif at 372-377 (TLGYGD) is the Selectivity filter element. The stretch at 372 to 379 (TLGYGDMV) is an intramembrane region. Over 380 to 386 (PSTIAGK) the chain is Extracellular. The chain crosses the membrane as a helical span at residues 387-415 (IFGSICSLSGVLVIALPVPVIVSNFSRIY). The Cytoplasmic portion of the chain corresponds to 416 to 648 (HQNQRADKRR…LPETVKISSL (233 aa)). S458 is subject to Phosphoserine. The segment at 474–489 (FEQQHHHLLHCLEKTT) is mediates dendritic targeting. Residues 474-489 (FEQQHHHLLHCLEKTT) form a required for dendritic targeting region. A Phosphoserine modification is found at S555. A disordered region spans residues 601–636 (IPTPPANTPDESQPSSPGGGGGGASSTLRNSSLGTP).

The protein belongs to the potassium channel family. D (Shal) (TC 1.A.1.2) subfamily. Kv4.1/KCND1 sub-subfamily. In terms of assembly, component of heteromultimeric potassium channels. Identified in potassium channel complexes containing KCND1, KCND2, KCND3, KCNIP1, KCNIP2, KCNIP3, KCNIP4, DPP6 and DPP10.

It is found in the cell membrane. The enzyme catalyses K(+)(in) = K(+)(out). Its function is as follows. A-type voltage-gated potassium channel that mediates transmembrane potassium transport in excitable membranes in the brain. Mediates A-type current I(SA) in suprachiasmatic nucleus (SCN) neurons. Exhibits a low-threshold A-type current with a hyperpolarized steady-state inactivation midpoint and the recovery process was steeply voltage-dependent, with recovery being markedly faster at more negative potentials. May regulates repetitive firing rates in the suprachiasmatic nucleus (SCN) neurons and circadian rhythms in neuronal excitability and behavior. Contributes to the regulation of the circadian rhythm of action potential firing in suprachiasmatic nucleus neurons, which regulates the circadian rhythm of locomotor activity. The regulatory subunit KCNIP1 modulates the kinetics of channel inactivation, increases the current amplitudes and accelerates recovery from inactivation, shifts activation in a depolarizing direction. The regulatory subunit DPP10 decreases the voltage sensitivity of the inactivation channel gating. The protein is A-type voltage-gated potassium channel KCND1 of Bos taurus (Bovine).